We begin with the raw amino-acid sequence, 529 residues long: MSNPLFLGEVSKRRTFAIISHPDAGKTTITEKVLLFGNAIQKAGTVKGRGNAQHAKSDWMEMEKERGISVTTSVMQFPYNDCLVNLLDTPGHEDFSEDTYRTLTAVDSCLMVIDAAKGVEDRTRKLMEVTRLRDTPIVTFMNKLDRDVRDPMEVLDEVENELGMMCAPITWPIGCGKEFKGVYHIHRDETILYESGHGHEIQEVRIIKGLDNPELDEKVGESLAASVREELELVMGACPEFDHEAFLVGELTPVYFGTALGNFGVDHMLDGLTEWAPAPKTRQAVERDVEATEDKFSGFVFKIQANMDPKHRDRIAFMRIVSGTYTQGMKMNHVRLGKQVSISDAVTFMAGDRSRAEHAYAGDIIGLHNHGTIQIGDTFTQGEALKFSGIPNFAPELFRRIRLKDPLKQKQLLKGLVQLSEEGAVQVFRPLQNNDLIVGAVGVLQFDVVVARLKSEYNVEAIYEGVNVATARWVECGDAKKLDEFQRKNQTNLALDGGDNLTYIAPTMVNLNLAQERFPDIDFRATREH.

Residues 11–280 (SKRRTFAIIS…GLTEWAPAPK (270 aa)) enclose the tr-type G domain. Residues 20-27 (SHPDAGKT), 88-92 (DTPGH), and 142-145 (NKLD) each bind GTP.

The protein belongs to the TRAFAC class translation factor GTPase superfamily. Classic translation factor GTPase family. PrfC subfamily.

The protein localises to the cytoplasm. Its function is as follows. Increases the formation of ribosomal termination complexes and stimulates activities of RF-1 and RF-2. It binds guanine nucleotides and has strong preference for UGA stop codons. It may interact directly with the ribosome. The stimulation of RF-1 and RF-2 is significantly reduced by GTP and GDP, but not by GMP. The sequence is that of Peptide chain release factor 3 from Vibrio campbellii (strain ATCC BAA-1116).